Consider the following 186-residue polypeptide: Peptidyl-tRNA hydrolase (186 aa).

Tyr-14 is a tRNA binding site. His-19 acts as the Proton acceptor in catalysis. TRNA contacts are provided by Phe-64, Asn-66, and Asn-112.

Belongs to the PTH family. Monomer.

The protein localises to the cytoplasm. It catalyses the reaction an N-acyl-L-alpha-aminoacyl-tRNA + H2O = an N-acyl-L-amino acid + a tRNA + H(+). In terms of biological role, hydrolyzes ribosome-free peptidyl-tRNAs (with 1 or more amino acids incorporated), which drop off the ribosome during protein synthesis, or as a result of ribosome stalling. Functionally, catalyzes the release of premature peptidyl moieties from peptidyl-tRNA molecules trapped in stalled 50S ribosomal subunits, and thus maintains levels of free tRNAs and 50S ribosomes. The protein is Peptidyl-tRNA hydrolase of Mycoplasma mycoides subsp. mycoides SC (strain CCUG 32753 / NCTC 10114 / PG1).